The following is a 198-amino-acid chain: RNA 2',3'-cyclic phosphodiesterase (198 aa).

H39 acts as the Proton donor in catalysis. 2 consecutive short sequence motifs (HXTX) follow at residues 39-42 and 130-133; these read HLTL and HITL. H130 (proton acceptor) is an active-site residue.

The protein belongs to the 2H phosphoesterase superfamily. ThpR family.

It catalyses the reaction a 3'-end 2',3'-cyclophospho-ribonucleotide-RNA + H2O = a 3'-end 2'-phospho-ribonucleotide-RNA + H(+). Its function is as follows. Hydrolyzes RNA 2',3'-cyclic phosphodiester to an RNA 2'-phosphomonoester. The chain is RNA 2',3'-cyclic phosphodiesterase from Thermus thermophilus (strain ATCC 27634 / DSM 579 / HB8).